The following is a 611-amino-acid chain: Histone acetyltransferase KAT7 (611 aa).

The segment at 1-173 is disordered; it reads MPRRKRNAGS…SDLSHRPKRR (173 aa). Serine 10 bears the Phosphoserine mark. Positions 42 to 57 are enriched in low complexity; that stretch reads VTRSSARLSQSSQDSS. A phosphoserine; by ATR mark is found at serine 50 and serine 53. Serine 57 carries the post-translational modification Phosphoserine; by PLK1. Serine 64 carries the post-translational modification Phosphoserine. Residues threonine 85 and threonine 88 each carry the phosphothreonine; by CDK1 modification. Residues 96–105 show a composition bias toward polar residues; it reads QTRSSGSETE. Serine 102 carries the post-translational modification Phosphoserine. Residue threonine 104 is modified to Phosphothreonine. The span at 110 to 125 shows a compositional bias: basic and acidic residues; sequence FSDRETKNTADHDESP. Serine 111 and serine 124 each carry phosphoserine. A Phosphothreonine modification is found at threonine 128. Low complexity predominate over residues 134-145; sequence PSSESDIDISSP. Over residues 148-168 the composition is skewed to basic and acidic residues; the sequence is SHDESIAKDMSLKDSGSDLSH. Residues serine 158, serine 162, serine 164, and serine 178 each carry the phosphoserine modification. The CCHHC-type zinc finger occupies 176–219; sequence HESYNFNMKCPTPGCNSLGHLTGKHERHFSISGCPLYHNLSADE. N6-acetyllysine occurs at positions 199 and 277. Lysine 323 participates in a covalent cross-link: Glycyl lysine isopeptide (Lys-Gly) (interchain with G-Cter in SUMO2). The 276-residue stretch at 332–607 folds into the MYST-type HAT domain; the sequence is EGSNMIKTIA…MDPSCLKWTP (276 aa). Residue lysine 338 forms a Glycyl lysine isopeptide (Lys-Gly) (interchain with G-Cter in ubiquitin) linkage. Residues 365–390 form a C2HC MYST-type zinc finger; sequence LYMCEFCLKYMKSQTILRRHMAKCVW. Zn(2+) is bound by residues cysteine 368, cysteine 371, histidine 384, and cysteine 388. An N6-acetyllysine; by autocatalysis modification is found at lysine 432. Residues 475–477 and 483–488 contribute to the acetyl-CoA site; these read ILT and RQGYGK. Serine 506 bears the Phosphoserine mark. Glutamate 508 serves as the catalytic Proton donor/acceptor. Acetyl-CoA is bound by residues serine 512 and serine 521.

It belongs to the MYST (SAS/MOZ) family. As to quaternary structure, component of the HBO1 complex composed of KAT7/HBO1, MEAF6, ING4 or ING5, and one scaffold subunit: complexes containing BRPF scaffold (BRPF1, BRD1/BRPF2 or BRPF3) direct KAT7/HBO1 specificity towards H3K14ac, while complexes containing JADE scaffold (JADE1, JADE2 and JADE3) mediate acetylation of histone H4. Interacts with MCM2 and ORC1. Interacts with the androgen receptor (AR); in the presence of dihydrotestosterone. Interacts with CDT1. Interacts with MAP2K1 and CUL1. Interacts with p53/TP53; leading to inhibit histone acetyltransferase activity. Interacts with MIS18BP1. Phosphorylated at Ser-50 and Ser-53 by ATR in response to DNA damage, promoting its ubiquitination by the CRL4(DDB2) complex and subsequent degradation. Phosphorylation at Ser-50 and Ser-53 by ATR in response to ultraviolet-induced DNA, promotes localization to DNA damage sites. Phosphorylation at Ser-57 by PLK1 during mitosis seems important for prereplicative complex formation and DNA replication licensing, and requires prior phosphorylation at Thr-85 and Thr-88 by CDK1. Phosphorylated by MAP2K1, which accelerates its degradation. Post-translationally, ubiquitinated at Lys-338, leading to proteasomal degradation. Ubiquitinated by the CRL4(DDB2) complex following phosphorylation by ATR, leading to its subsequent degradation. In terms of processing, autoacetylation at Lys-432 is required for proper function. In terms of tissue distribution, ubiquitously expressed, with highest levels in testis.

It is found in the nucleus. It localises to the chromosome. The protein resides in the centromere. Its subcellular location is the cytoplasm. The protein localises to the cytosol. The enzyme catalyses L-lysyl-[histone] + acetyl-CoA = N(6)-acetyl-L-lysyl-[histone] + CoA + H(+). With respect to regulation, histone acetyltransferase activity is inhibited by GMNN in the context of a complex with CDT1, inhibiting histone H4 acetylation and DNA replication licensing. Selectively inhibited by WM-3835 (N'-(4-fluoro-5-methyl-[1,1'-biphenyl]-3-carbonyl)-3- hydroxybenzenesulfonohydrazide) inhibitor. Catalytic subunit of histone acetyltransferase HBO1 complexes, which specifically mediate acetylation of histone H3 at 'Lys-14' (H3K14ac), thereby regulating various processes, such as gene transcription, protein ubiquitination, immune regulation, stem cell pluripotent and self-renewal maintenance and embryonic development. Some complexes also catalyze acetylation of histone H4 at 'Lys-5', 'Lys-8' and 'Lys-12' (H4K5ac, H4K8ac and H4K12ac, respectively), regulating DNA replication initiation, regulating DNA replication initiation. Specificity of the HBO1 complexes is determined by the scaffold subunit: complexes containing BRPF scaffold (BRPF1, BRD1/BRPF2 or BRPF3) direct KAT7/HBO1 specificity towards H3K14ac, while complexes containing JADE (JADE1, JADE2 and JADE3) scaffold direct KAT7/HBO1 specificity towards histone H4. H3K14ac promotes transcriptional elongation by facilitating the processivity of RNA polymerase II. Acts as a key regulator of hematopoiesis by forming a complex with BRD1/BRPF2, directing KAT7/HBO1 specificity towards H3K14ac and promoting erythroid differentiation. H3K14ac is also required for T-cell development. KAT7/HBO1-mediated acetylation facilitates two consecutive steps, licensing and activation, in DNA replication initiation: H3K14ac facilitates the activation of replication origins, and histone H4 acetylation (H4K5ac, H4K8ac and H4K12ac) facilitates chromatin loading of MCM complexes, promoting DNA replication licensing. Acts as a positive regulator of centromeric CENPA assembly: recruited to centromeres and mediates histone acetylation, thereby preventing centromere inactivation mediated by SUV39H1, possibly by increasing histone turnover/exchange. Involved in nucleotide excision repair: phosphorylation by ATR in response to ultraviolet irradiation promotes its localization to DNA damage sites, where it mediates histone acetylation to facilitate recruitment of XPC at the damaged DNA sites. Acts as an inhibitor of NF-kappa-B independently of its histone acetyltransferase activity. Functionally, plays a central role in the maintenance of leukemia stem cells in acute myeloid leukemia (AML). Acts by mediating acetylation of histone H3 at 'Lys-14' (H3K14ac), thereby facilitating the processivity of RNA polymerase II to maintain the high expression of key genes, such as HOXA9 and HOXA10 that help to sustain the functional properties of leukemia stem cells. In Homo sapiens (Human), this protein is Histone acetyltransferase KAT7.